Here is a 512-residue protein sequence, read N- to C-terminus: ATP synthase subunit alpha, chloroplastic (512 aa).

170–177 contributes to the ATP binding site; the sequence is GDRQTGKT.

It belongs to the ATPase alpha/beta chains family. In terms of assembly, F-type ATPases have 2 components, CF(1) - the catalytic core - and CF(0) - the membrane proton channel. CF(1) has five subunits: alpha(3), beta(3), gamma(1), delta(1), epsilon(1). CF(0) has four main subunits: a, b, b' and c.

The protein resides in the plastid. It localises to the chloroplast thylakoid membrane. It carries out the reaction ATP + H2O + 4 H(+)(in) = ADP + phosphate + 5 H(+)(out). Its function is as follows. Produces ATP from ADP in the presence of a proton gradient across the membrane. The alpha chain is a regulatory subunit. This Staurastrum punctulatum (Green alga) protein is ATP synthase subunit alpha, chloroplastic.